The chain runs to 260 residues: Voltage-dependent calcium channel gamma-6 subunit (260 aa).

A disordered region spans residues 14–33; the sequence is RRGAAGRRRAHGQGRSGLTP. Basic residues predominate over residues 15–25; sequence RGAAGRRRAHG. Helical transmembrane passes span 43–63, 143–163, 169–189, and 221–241; these read LLLA…EFWV, VIAV…IMVL, FLLR…LVSL, and LGCG…FLLL.

This sequence belongs to the PMP-22/EMP/MP20 family. CACNG subfamily. Interacts with CACNA1C. Identified in a complex with the L-type calcium channel subunits CACNA1C, CACNA2D1 and either CACNB1 or CACNB2. Detected in heart left ventricle.

The protein localises to the cell membrane. Regulates the activity of L-type calcium channels that contain CACNA1C as pore-forming subunit. The polypeptide is Voltage-dependent calcium channel gamma-6 subunit (CACNG6) (Homo sapiens (Human)).